Reading from the N-terminus, the 270-residue chain is tRNA 2-(methylsulfanyl)-N(6)-isopentenyladenosine(37) hydroxylase (270 aa).

Residues Glu59, Glu137, His140, Glu190, Glu219, and His222 each contribute to the Fe cation site.

This sequence belongs to the MiaE family. As to quaternary structure, monomer. The cofactor is Fe cation.

The catalysed reaction is 2-methylsulfanyl-N(6)-dimethylallyladenosine(37) in tRNA + AH2 + O2 = N(6)-[(2E)-4-hydroxy-3-methylbut-2-en-1-yl]-2-(methylsulfanyl)adenosine(37) in tRNA + A + H2O. It participates in tRNA modification; 2-methylthio-N-6-(cis-hydroxy)isopentenyl adenosine-tRNA biosynthesis. Involved in specific tRNA modification. Catalyzes the oxygen-dependent hydroxylation of 2-methylthio-N-6-isopentenyl adenosine (ms2i6A) to produce 2-methylthio-N-6-(cis-hydroxy)isopentenyl adenosine (ms2io6A) at position 37 in tRNAs. Can also use N6-(dimethylallyl)adenosine (i6A) as substrate, with lower efficiency. The presence of the hydroxyl group on the tRNA may regulate the ability of S.typhimurium to grow on the citric acid cycle (CAC) intermediates succinate, fumarate and malate. This is tRNA 2-(methylsulfanyl)-N(6)-isopentenyladenosine(37) hydroxylase from Salmonella typhimurium (strain LT2 / SGSC1412 / ATCC 700720).